A 190-amino-acid polypeptide reads, in one-letter code: Putative manganese efflux pump MntP (190 aa).

6 helical membrane-spanning segments follow: residues 3–23, 39–59, 65–85, 106–128, 133–155, and 157–177; these read PASIIFLAFAMSTDAFAAAVG, IGLIFGVIEAITPVVGWFIGQ, VANWDHWIAFSLLLLLGLHMI, WLLAVTGLATSIDALAVGVGLAF, IWVAASAIGLATMTMVTLGVMLG, and AIGTVMGQRAEVLGGVVLIIV.

Belongs to the MntP (TC 9.B.29) family.

The protein resides in the cell inner membrane. Probably functions as a manganese efflux pump. The protein is Putative manganese efflux pump MntP of Pseudomonas fluorescens (strain ATCC BAA-477 / NRRL B-23932 / Pf-5).